The sequence spans 1252 residues: Immunoglobulin superfamily DCC subclass member 4 (1252 aa).

The first 22 residues, 1–22 (MARADTGRGLLVLTFCLLSARG), serve as a signal peptide directing secretion. Topologically, residues 23–956 (ELPLPQETTV…SDSLDVHAVT (934 aa)) are extracellular. Ig-like domains are found at residues 27-136 (PQET…VAVV), 142-228 (EDFS…ASLT), 241-329 (QDVV…AELR), and 334-420 (PAIS…APLA). Intrachain disulfides connect cysteine 55-cysteine 120 and cysteine 163-cysteine 211. An N-linked (GlcNAc...) asparagine glycan is attached at asparagine 88. A glycan (N-linked (GlcNAc...) asparagine) is linked at asparagine 251. 2 cysteine pairs are disulfide-bonded: cysteine 264–cysteine 311 and cysteine 355–cysteine 404. 5 Fibronectin type-III domains span residues 430 to 524 (APTR…TLDD), 526 to 622 (PSAA…TPGV), 631 to 742 (APAE…TPDL), 751 to 844 (PPAH…TLPD), and 849 to 944 (PPSD…TLQK). The segment at 669–688 (TEEEADGDRPPGGRGDQAWD) is disordered. A helical membrane pass occupies residues 957–977 (GIIVGVCLGLLCLLACMCAGL). The Cytoplasmic segment spans residues 978–1252 (RRSSHREALP…RAPVSSAQVP (275 aa)). Threonine 994 is modified (phosphothreonine).

Belongs to the immunoglobulin superfamily. DCC family. Expressed in skeletal muscle, heart and brain. Brain expression is hippocampus-specific.

Its subcellular location is the cell membrane. This Mus musculus (Mouse) protein is Immunoglobulin superfamily DCC subclass member 4 (Igdcc4).